Here is a 495-residue protein sequence, read N- to C-terminus: Probable cytosol aminopeptidase (495 aa).

Mn(2+) is bound by residues Lys-266 and Asp-271. Lys-278 is a catalytic residue. The Mn(2+) site is built by Asp-289, Asp-348, and Glu-350. Arg-352 is a catalytic residue.

It belongs to the peptidase M17 family. Mn(2+) serves as cofactor.

The protein localises to the cytoplasm. It carries out the reaction Release of an N-terminal amino acid, Xaa-|-Yaa-, in which Xaa is preferably Leu, but may be other amino acids including Pro although not Arg or Lys, and Yaa may be Pro. Amino acid amides and methyl esters are also readily hydrolyzed, but rates on arylamides are exceedingly low.. The catalysed reaction is Release of an N-terminal amino acid, preferentially leucine, but not glutamic or aspartic acids.. Functionally, presumably involved in the processing and regular turnover of intracellular proteins. Catalyzes the removal of unsubstituted N-terminal amino acids from various peptides. In Pseudomonas aeruginosa (strain UCBPP-PA14), this protein is Probable cytosol aminopeptidase.